A 340-amino-acid polypeptide reads, in one-letter code: Short-chain dehydrogenase/reductase ffsI (340 aa).

The NADP(+) site is built by Leu-46, Arg-71, Asp-96, Asn-123, Tyr-211, and Lys-215. Tyr-211 acts as the Proton acceptor in catalysis. The active-site Lowers pKa of active site Tyr is the Lys-215.

This sequence belongs to the short-chain dehydrogenases/reductases (SDR) family.

Its pathway is mycotoxin biosynthesis. Its function is as follows. Short-chain dehydrogenase/reductase; part of the gene cluster that mediates the biosynthesis of the cytotoxic leucine-containing cytochalasans, including aspochalasin C, aspochalasin E, TMC-169, flavichalasine F, aspergillin PZ, aspochalasin M and flavichalasine G. The first step in the pathway is catalyzed by the hybrid PKS-NRPS ffsA that utilizes 8 units of malonyl-CoA to iteratively assemble the octaketide chain before addition of L-leucine by the C-terminal NRPS modules. Because ffsA lacks a designated enoylreductase (ER) domain, the required activity is provided the enoyl reductase fssC. The methyltransferase (MT) domain of ffsA catalyzes the alpha-methylation at C10 and C14 using S-adenosyl-L-methionine as the methyl-donating cosubstrate. Reduction by the hydrolyase ffsE, followed by dehydration and intra-molecular Diels-Alder cyclization by the Diels-Alderase ffsF then yield the required isoindolone-fused macrocycle. A number of oxidative steps catalyzed by the tailoring cytochrome P450 monooxygenase ffsD, the FAD-linked oxidoreductase ffsJ and the short-chain dehydrogenase/reductase ffsI, are further required to afford the final products. The chain is Short-chain dehydrogenase/reductase ffsI from Aspergillus flavipes.